Here is a 463-residue protein sequence, read N- to C-terminus: Bifunctional protein HldE (463 aa).

The interval 1 to 311 (MKKILVVGDL…EEIALILNQT (311 aa)) is ribokinase. ATP is bound at residue 191–194 (NRFE). The active site involves Asp260. A cytidylyltransferase region spans residues 334–463 (FTNGCFDLLH…IEKIKRTCND (130 aa)).

This sequence in the N-terminal section; belongs to the carbohydrate kinase PfkB family. In the C-terminal section; belongs to the cytidylyltransferase family. As to quaternary structure, homodimer.

It carries out the reaction D-glycero-beta-D-manno-heptose 7-phosphate + ATP = D-glycero-beta-D-manno-heptose 1,7-bisphosphate + ADP + H(+). The enzyme catalyses D-glycero-beta-D-manno-heptose 1-phosphate + ATP + H(+) = ADP-D-glycero-beta-D-manno-heptose + diphosphate. The protein operates within nucleotide-sugar biosynthesis; ADP-L-glycero-beta-D-manno-heptose biosynthesis; ADP-L-glycero-beta-D-manno-heptose from D-glycero-beta-D-manno-heptose 7-phosphate: step 1/4. It functions in the pathway nucleotide-sugar biosynthesis; ADP-L-glycero-beta-D-manno-heptose biosynthesis; ADP-L-glycero-beta-D-manno-heptose from D-glycero-beta-D-manno-heptose 7-phosphate: step 3/4. In terms of biological role, catalyzes the phosphorylation of D-glycero-D-manno-heptose 7-phosphate at the C-1 position to selectively form D-glycero-beta-D-manno-heptose-1,7-bisphosphate. Catalyzes the ADP transfer from ATP to D-glycero-beta-D-manno-heptose 1-phosphate, yielding ADP-D-glycero-beta-D-manno-heptose. This chain is Bifunctional protein HldE, found in Helicobacter pylori (strain G27).